The sequence spans 260 residues: uncharacterized protein (260 aa).

A signal peptide spans 1 to 22 (MKHSKKLLLCISFLLITIFISG). Residue cysteine 23 is the site of N-palmitoyl cysteine attachment. A lipid anchor (S-diacylglycerol cysteine) is attached at cysteine 23.

Belongs to the staphylococcal tandem lipoprotein family.

The protein localises to the cell membrane. This is an uncharacterized protein from Staphylococcus epidermidis (strain ATCC 35984 / DSM 28319 / BCRC 17069 / CCUG 31568 / BM 3577 / RP62A).